The primary structure comprises 65 residues: Large ribosomal subunit protein bL35 (65 aa).

This sequence belongs to the bacterial ribosomal protein bL35 family.

The protein is Large ribosomal subunit protein bL35 of Parasynechococcus marenigrum (strain WH8102).